The following is a 366-amino-acid chain: Growth hormone secretagogue receptor type 1 (366 aa).

The Extracellular portion of the chain corresponds to 1 to 40 (MWNATPSEEPGFNLTLADLDWDASPGNDSLGDELLQLFPA). N-linked (GlcNAc...) asparagine glycosylation is found at Asn13 and Asn27. Residues 41-66 (PLLAGVTATCVALFVVGIAGNLLTML) form a helical membrane-spanning segment. Topologically, residues 67–72 (VVSRFR) are cytoplasmic. A helical membrane pass occupies residues 73 to 96 (ELRTTTNLYLSSMAFSDLLIFLCM). Residues 97–117 (PLDLVRLWQYRPWNFGDLLCK) lie on the Extracellular side of the membrane. A disulfide bond links Cys116 and Cys198. A helical transmembrane segment spans residues 118 to 139 (LFQFVSESCTYATVLTITALSV). Residues 140 to 162 (ERYFAICFPLRAKVVVTKGRVKL) are Cytoplasmic-facing. Residues 163-183 (VIFVIWAVAFCSAGPIFVLVG) form a helical membrane-spanning segment. The Extracellular portion of the chain corresponds to 184-211 (VEHENGTDPWDTNECRPTEFAVRSGLLT). A helical membrane pass occupies residues 212–235 (VMVWVSSIFFFLPVFCLTVLYSLI). The Cytoplasmic portion of the chain corresponds to 236–263 (GRKLWRRRRGDAVVGASLRDQNHKQTVK). A helical membrane pass occupies residues 264–285 (MLAVVVFAFILCWLPFHVGRYL). The Extracellular portion of the chain corresponds to 286–302 (FSKSFEPGSLEIAQISQ). The chain crosses the membrane as a helical span at residues 303 to 326 (YCNLVSFVLFYLSAAINPILYNIM). Residues 327 to 366 (SKKYRVAVFRLLGFEPFSQRKLSTLKDESSRAWTESSINT) are Cytoplasmic-facing.

This sequence belongs to the G-protein coupled receptor 1 family. In terms of tissue distribution, pituitary and hypothalamus.

It localises to the cell membrane. In terms of biological role, receptor for ghrelin, coupled to G-alpha-11 proteins. Stimulates growth hormone secretion. Also binds other growth hormone releasing peptides (GHRP) (e.g. Met-enkephalin and GHRP-6) as well as non-peptide, low molecular weight secretagogues (e.g. L-692,429, MK-0677, adenosine). The sequence is that of Growth hormone secretagogue receptor type 1 (GHSR) from Homo sapiens (Human).